A 142-amino-acid polypeptide reads, in one-letter code: Phosphoribosyl-AMP cyclohydrolase (142 aa).

Aspartate 92 is a binding site for Mg(2+). Cysteine 93 contacts Zn(2+). Mg(2+) contacts are provided by aspartate 94 and aspartate 96. The Zn(2+) site is built by cysteine 109 and cysteine 116.

This sequence belongs to the PRA-CH family. Homodimer. It depends on Mg(2+) as a cofactor. Zn(2+) serves as cofactor.

It is found in the cytoplasm. It carries out the reaction 1-(5-phospho-beta-D-ribosyl)-5'-AMP + H2O = 1-(5-phospho-beta-D-ribosyl)-5-[(5-phospho-beta-D-ribosylamino)methylideneamino]imidazole-4-carboxamide. It functions in the pathway amino-acid biosynthesis; L-histidine biosynthesis; L-histidine from 5-phospho-alpha-D-ribose 1-diphosphate: step 3/9. Functionally, catalyzes the hydrolysis of the adenine ring of phosphoribosyl-AMP. This Alcanivorax borkumensis (strain ATCC 700651 / DSM 11573 / NCIMB 13689 / SK2) protein is Phosphoribosyl-AMP cyclohydrolase.